The sequence spans 194 residues: Oligoribonuclease (194 aa).

The Exonuclease domain maps to 11–174 (LIWIDLEMTG…SDVRDSIDEL (164 aa)). The active site involves Tyr132.

The protein belongs to the oligoribonuclease family.

It is found in the cytoplasm. Functionally, 3'-to-5' exoribonuclease specific for small oligoribonucleotides. The chain is Oligoribonuclease from Xanthomonas euvesicatoria pv. vesicatoria (strain 85-10) (Xanthomonas campestris pv. vesicatoria).